We begin with the raw amino-acid sequence, 479 residues long: Pup--protein ligase (479 aa).

E17 serves as a coordination point for Mg(2+). Residue R62 coordinates ATP. Y64 is a binding site for Mg(2+). Residue D66 is the Proton acceptor of the active site. Residue E72 coordinates Mg(2+). Positions 75 and 432 each coordinate ATP.

Belongs to the Pup ligase/Pup deamidase family. Pup-conjugating enzyme subfamily.

The enzyme catalyses ATP + [prokaryotic ubiquitin-like protein]-L-glutamate + [protein]-L-lysine = ADP + phosphate + N(6)-([prokaryotic ubiquitin-like protein]-gamma-L-glutamyl)-[protein]-L-lysine.. It functions in the pathway protein degradation; proteasomal Pup-dependent pathway. It participates in protein modification; protein pupylation. Its function is as follows. Catalyzes the covalent attachment of the prokaryotic ubiquitin-like protein modifier Pup to the proteasomal substrate proteins, thereby targeting them for proteasomal degradation. This tagging system is termed pupylation. The ligation reaction involves the side-chain carboxylate of the C-terminal glutamate of Pup and the side-chain amino group of a substrate lysine. This is Pup--protein ligase from Corynebacterium diphtheriae (strain ATCC 700971 / NCTC 13129 / Biotype gravis).